Here is a 273-residue protein sequence, read N- to C-terminus: Cell wall mannoprotein 1 (273 aa).

The first 17 residues, 1 to 17 (MRFSAIFTLGLAGTALA), serve as a signal peptide directing secretion. The disordered stretch occupies residues 173 to 247 (DVSDSAPSSS…GSASATSPPL (75 aa)). The span at 177–247 (SAPSSSAGSS…GSASATSPPL (71 aa)) shows a compositional bias: low complexity.

Belongs to the cell wall mannoprotein 1 family. In terms of processing, galactomannoprotein, glycosylated.

It is found in the secreted. The protein resides in the cell wall. Constitutive protein of the cell wall. Antigen target of host humoral immune response. This chain is Cell wall mannoprotein 1, found in Aspergillus flavus.